Reading from the N-terminus, the 420-residue chain is Glutamyl-tRNA reductase (420 aa).

Substrate-binding positions include 49 to 52, Ser109, 114 to 116, and Gln120; these read TCNR and EPQ. The active-site Nucleophile is the Cys50. 189–194 serves as a coordination point for NADP(+); it reads GAGETI.

This sequence belongs to the glutamyl-tRNA reductase family. As to quaternary structure, homodimer.

It catalyses the reaction (S)-4-amino-5-oxopentanoate + tRNA(Glu) + NADP(+) = L-glutamyl-tRNA(Glu) + NADPH + H(+). It participates in porphyrin-containing compound metabolism; protoporphyrin-IX biosynthesis; 5-aminolevulinate from L-glutamyl-tRNA(Glu): step 1/2. Functionally, catalyzes the NADPH-dependent reduction of glutamyl-tRNA(Glu) to glutamate 1-semialdehyde (GSA). The protein is Glutamyl-tRNA reductase of Yersinia pseudotuberculosis serotype O:1b (strain IP 31758).